The following is an 879-amino-acid chain: Phosphoenolpyruvate carboxylase (879 aa).

Residues His-138 and Lys-545 contribute to the active site.

It belongs to the PEPCase type 1 family. Mg(2+) serves as cofactor.

The catalysed reaction is oxaloacetate + phosphate = phosphoenolpyruvate + hydrogencarbonate. Forms oxaloacetate, a four-carbon dicarboxylic acid source for the tricarboxylic acid cycle. The protein is Phosphoenolpyruvate carboxylase of Haemophilus influenzae (strain PittEE).